The following is a 307-amino-acid chain: N-acetylmuramic acid 6-phosphate etherase (307 aa).

An SIS domain is found at 62–225 (IVSSFNRGGR…STASMIRIGK (164 aa)). The Proton donor role is filled by Glu90. Glu121 is an active-site residue.

Belongs to the GCKR-like family. MurNAc-6-P etherase subfamily. As to quaternary structure, homodimer.

It catalyses the reaction N-acetyl-D-muramate 6-phosphate + H2O = N-acetyl-D-glucosamine 6-phosphate + (R)-lactate. It participates in amino-sugar metabolism; 1,6-anhydro-N-acetylmuramate degradation. It functions in the pathway amino-sugar metabolism; N-acetylmuramate degradation. Its pathway is cell wall biogenesis; peptidoglycan recycling. Functionally, specifically catalyzes the cleavage of the D-lactyl ether substituent of MurNAc 6-phosphate, producing GlcNAc 6-phosphate and D-lactate. Together with AnmK, is also required for the utilization of anhydro-N-acetylmuramic acid (anhMurNAc) either imported from the medium or derived from its own cell wall murein, and thus plays a role in cell wall recycling. This is N-acetylmuramic acid 6-phosphate etherase from Pseudoalteromonas atlantica (strain T6c / ATCC BAA-1087).